Here is a 626-residue protein sequence, read N- to C-terminus: MARIPEEVIDQVRNQADIVDIIGNYVQLKKQGRNYSGLCPFHGEKTPSFSVSPEKQIFHCFGCGKGGNVFSFLMEHDGLTFVESVKKVADMSHLDVAIELPEERDTSNLPKETSETAKMVEMHQLTAKLYHYILMETEEGTAALTYLKERGMSEQMMTTFQIGFAPNHHATITSFLEKRGMDLQLAGAAGLLSERDDGQMVDRFRNRIMFPITNDRGQIIAFSGRLFDRDDGPKYLNSPETPVFNKRRILFHFSEARQAIRKQEEITLMEGFMDVISAEEAGVQNAVASMGTSLTEEHADLIKRLTNRAIICYDGDRAGIEAAYKAGTLLVERNRLDVFVLQLPAGKDPDDFIRASGPEKFKEVYKQQRMTWTAFKIHYLRKERNLQNETEQIGYIDDCLREIAKLDQAVERELYLKQLADEFELTIETLKQQLQQSLKNSQKSRQMASYNEPPIDDSFMGMMPQEGAEMLFSFEQPAQKLSAHTISEQQLMKAMMESRDNFLLIKQLLGDTTFYHDNYEALYTYLIGYFAEGNDADPTKFMDSVPDAAMKGLISSLEMVISPDEQGKPQFEDYIRSLKRYKLEQKKKELEQELATYNRENDNENEIRVMLEIVQLNRQLNSGQLD.

Residues 39–63 form a CHC2-type zinc finger; that stretch reads CPFHGEKTPSFSVSPEKQIFHCFGC. Residues 264–346 form the Toprim domain; the sequence is EEITLMEGFM…DVFVLQLPAG (83 aa). Mg(2+)-binding residues include glutamate 270, aspartate 314, and aspartate 316.

Belongs to the DnaG primase family. In terms of assembly, monomer. Interacts with DnaB. Zn(2+) serves as cofactor. Requires Mg(2+) as cofactor.

It catalyses the reaction ssDNA + n NTP = ssDNA/pppN(pN)n-1 hybrid + (n-1) diphosphate.. Its function is as follows. RNA polymerase that catalyzes the synthesis of short RNA molecules used as primers for DNA polymerase during DNA replication. The polypeptide is DNA primase (Listeria monocytogenes serovar 1/2a (strain ATCC BAA-679 / EGD-e)).